A 1365-amino-acid chain; its full sequence is Histone-lysine N-methyltransferase NSD2 (1365 aa).

Phosphothreonine occurs at positions 110 and 114. The residue at position 121 (Ser121) is a Phosphoserine. Residues 149 to 170 (ADVSQSEENGQKPENKARRNRK) form a disordered region. Ser172 carries the post-translational modification Phosphoserine. In terms of domain architecture, PWWP 1 spans 222 to 286 (VGDLVWSKVS…FEKSLVAFEG (65 aa)). Phosphoserine is present on Ser376. Disordered stretches follow at residues 376-455 (SSGV…RKGD) and 516-658 (EDSG…SKKS). A Phosphothreonine modification is found at Thr422. Residues 453–521 (KGDAASQFLV…VQAEEDSGNV (69 aa)) constitute a DNA-binding region (HMG box). Position 544 is a phosphothreonine (Thr544). A compositionally biased stretch (basic and acidic residues) spans 552–567 (DKHSLRKRDTITDKTA). Polar residues predominate over residues 580–590 (SLKSQAATKNL). The segment covering 606 to 622 (AASSALGFSKSSSPSAS) has biased composition (low complexity). At Ser614 the chain carries Phosphoserine. The segment covering 632–648 (PGDEPSESPYESADETQ) has biased composition (acidic residues). 3 consecutive PHD-type zinc fingers follow at residues 667-713 (EYVC…CASG), 714-770 (IHSC…CHAS), and 831-875 (VSWC…CRAG). A PWWP 2 domain is found at 880 to 942 (FQDIIWVKLG…QARVFPYMEG (63 aa)). Residues 1011–1061 (SEIPKCNCKPTDENPCGFDSECLNRMLMFECHPQVCPAGEFCQNQCFTKRQ) enclose the AWS domain. 7 residues coordinate Zn(2+): Cys1016, Cys1018, Cys1026, Cys1032, Cys1041, Cys1046, and Cys1052. Residues 1063–1180 (PETKIIKTDG…AGTELTFNYN (118 aa)) enclose the SET domain. Residues Trp1075, 1115–1118 (THFY), and 1141–1142 (NH) each bind S-adenosyl-L-methionine. Cys1144 contributes to the Zn(2+) binding site. Asn1186 is an S-adenosyl-L-methionine binding site. Residues 1187–1203 (EKTVCRCGASNCSGFLG) form the Post-SET domain. Position 1191 (Cys1191) interacts with Zn(2+). Residue Arg1192 coordinates S-adenosyl-L-methionine. Zn(2+)-binding residues include Cys1193 and Cys1198. The interval 1207–1232 (KTSTTLSSEEKGKKTKKKTRRRRAKG) is disordered. Positions 1219-1230 (KKTKKKTRRRRA) are enriched in basic residues. The PHD-type 4; atypical zinc finger occupies 1239–1286 (EDECFRCGDGGQLVLCDRKFCTKAYHLSCLGLGKRPFGKWECPWHHCD). A disordered region spans residues 1333 to 1365 (VRSTKTEKPPPEPGKPKGKRRRRRGWRRVTEGK). The segment covering 1348 to 1359 (PKGKRRRRRGWR) has biased composition (basic residues).

This sequence belongs to the class V-like SAM-binding methyltransferase superfamily. Histone-lysine methyltransferase family. SET2 subfamily. Interacts with HDAC1. Interacts (via PHD-type zinc fingers 1, 2 and 3) with SALL1. Interacts (via PHD-type 1, 2 and 3) with SALL4. Interacts with NANOG. Interacts with OGT. Interacts (via HMG box) with NKX2-5. As to expression, widely expressed. Predominantly expressed in thymus and testis.

It is found in the nucleus. The protein localises to the chromosome. It localises to the cytoplasm. The protein resides in the nucleolus. The catalysed reaction is L-lysyl(36)-[histone H3] + S-adenosyl-L-methionine = N(6)-methyl-L-lysyl(36)-[histone H3] + S-adenosyl-L-homocysteine + H(+). The enzyme catalyses L-lysyl(36)-[histone H3] + 2 S-adenosyl-L-methionine = N(6),N(6)-dimethyl-L-lysyl(36)-[histone H3] + 2 S-adenosyl-L-homocysteine + 2 H(+). Functionally, histone methyltransferase which specifically dimethylates nucleosomal histone H3 at 'Lys-36' (H3K36me2). Also monomethylates nucleosomal histone H3 at 'Lys-36' (H3K36me) in vitro. Does not trimethylate nucleosomal histone H3 at 'Lys-36' (H3K36me3). However, specifically trimethylates histone H3 at 'Lys-36' (H3K36me3) at euchromatic regions in embryonic stem (ES) cells. By methylating histone H3 at 'Lys-36', involved in the regulation of gene transcription during various biological processes. In ES cells, associates with developmental transcription factors such as SALL1 and represses inappropriate gene transcription mediated by histone deacetylation. During heart development, associates with transcription factor NKX2-5 to repress transcription of NKX2-5 target genes. Plays an essential role in adipogenesis, by regulating expression of genes involved in pre-adipocyte differentiation. During T-cell receptor (TCR) and CD28-mediated T-cell activation, promotes the transcription of transcription factor BCL6 which is required for follicular helper T (Tfh) cell differentiation. During B-cell development, required for the generation of the B1 lineage. During B2 cell activation, may contribute to the control of isotype class switch recombination (CRS), splenic germinal center formation, and the humoral immune response. Plays a role in class switch recombination of the immunoglobulin heavy chain (IgH) locus during B-cell activation. By regulating the methylation of histone H3 at 'Lys-36' and histone H4 at 'Lys-20' at the IgH locus, involved in TP53BP1 recruitment to the IgH switch region and promotes the transcription of IgA. Histone methyltransferase which specifically dimethylates nucleosomal histone H3 at 'Lys-36' (H3K36me2). In terms of biological role, histone methyltransferase which specifically dimethylates nucleosomal histone H3 at 'Lys-36' (H3K36me2). Methylation of histone H3 at 'Lys-27' is controversial. Mono-, di- or tri-methylates histone H3 at 'Lys-27' (H3K27me, H3K27me2 and H3K27me3). Does not methylate histone H3 at 'Lys-27'. May act as a transcription regulator that binds DNA and suppresses IL5 transcription through HDAC recruitment. The sequence is that of Histone-lysine N-methyltransferase NSD2 from Homo sapiens (Human).